The primary structure comprises 293 residues: Probable xyloglucan endotransglucosylase/hydrolase protein 5 (293 aa).

Positions 1-21 (MGRLSSTLCLTFLILATVAFG) are cleaved as a signal peptide. The region spanning 23 to 220 (PPKKSINVPF…WEKAPFVASY (198 aa)) is the GH16 domain. The active-site Nucleophile is Glu-106. The Proton donor role is filled by Glu-110. Glu-110 is a xyloglucan binding site. N-linked (GlcNAc...) asparagine glycosylation occurs at Asn-114. Xyloglucan contacts are provided by residues 123–125 (QTN), 133–135 (NRE), 199–200 (DW), and Gly-204. Intrachain disulfides connect Cys-228-Cys-237 and Cys-274-Cys-287. Arg-279 is a binding site for xyloglucan.

It belongs to the glycosyl hydrolase 16 family. XTH group 1 subfamily. Post-translationally, contains at least one intrachain disulfide bond essential for its enzymatic activity. In terms of tissue distribution, root specific.

It localises to the secreted. The protein localises to the cell wall. It is found in the extracellular space. The protein resides in the apoplast. It catalyses the reaction breaks a beta-(1-&gt;4) bond in the backbone of a xyloglucan and transfers the xyloglucanyl segment on to O-4 of the non-reducing terminal glucose residue of an acceptor, which can be a xyloglucan or an oligosaccharide of xyloglucan.. In terms of biological role, catalyzes xyloglucan endohydrolysis (XEH) and/or endotransglycosylation (XET). Cleaves and religates xyloglucan polymers, an essential constituent of the primary cell wall, and thereby participates in cell wall construction of growing tissues. The sequence is that of Probable xyloglucan endotransglucosylase/hydrolase protein 5 (XTH5) from Arabidopsis thaliana (Mouse-ear cress).